A 115-amino-acid polypeptide reads, in one-letter code: T cell receptor beta variable 11-1 (115 aa).

A signal peptide spans 1 to 21; that stretch reads MSTRLLCWMALCLLGAELSEA. The 94-residue stretch at 22-115 folds into the Ig-like domain; sequence EVAQSPRYKI…SAMYLCASSL (94 aa). A disulfide bridge connects residues Cys-42 and Cys-111.

Alpha-beta TR is a heterodimer composed of an alpha and beta chain; disulfide-linked. The alpha-beta TR is associated with the transmembrane signaling CD3 coreceptor proteins to form the TR-CD3 (TcR or TCR). The assembly of alpha-beta TR heterodimers with CD3 occurs in the endoplasmic reticulum where a single alpha-beta TR heterodimer associates with one CD3D-CD3E heterodimer, one CD3G-CD3E heterodimer and one CD247 homodimer forming a stable octameric structure. CD3D-CD3E and CD3G-CD3E heterodimers preferentially associate with TR alpha and TR beta chains, respectively. The association of the CD247 homodimer is the last step of TcR assembly in the endoplasmic reticulum and is required for transport to the cell surface.

It is found in the cell membrane. Functionally, v region of the variable domain of T cell receptor (TR) beta chain that participates in the antigen recognition. Alpha-beta T cell receptors are antigen specific receptors which are essential to the immune response and are present on the cell surface of T lymphocytes. Recognize peptide-major histocompatibility (MH) (pMH) complexes that are displayed by antigen presenting cells (APC), a prerequisite for efficient T cell adaptive immunity against pathogens. Binding of alpha-beta TR to pMH complex initiates TR-CD3 clustering on the cell surface and intracellular activation of LCK that phosphorylates the ITAM motifs of CD3G, CD3D, CD3E and CD247 enabling the recruitment of ZAP70. In turn ZAP70 phosphorylates LAT, which recruits numerous signaling molecules to form the LAT signalosome. The LAT signalosome propagates signal branching to three major signaling pathways, the calcium, the mitogen-activated protein kinase (MAPK) kinase and the nuclear factor NF-kappa-B (NF-kB) pathways, leading to the mobilization of transcription factors that are critical for gene expression and essential for T cell growth and differentiation. The T cell repertoire is generated in the thymus, by V-(D)-J rearrangement. This repertoire is then shaped by intrathymic selection events to generate a peripheral T cell pool of self-MH restricted, non-autoaggressive T cells. Post-thymic interaction of alpha-beta TR with the pMH complexes shapes TR structural and functional avidity. In Homo sapiens (Human), this protein is T cell receptor beta variable 11-1.